Here is a 115-residue protein sequence, read N- to C-terminus: Large ribosomal subunit protein bL19 (115 aa).

This sequence belongs to the bacterial ribosomal protein bL19 family.

This protein is located at the 30S-50S ribosomal subunit interface and may play a role in the structure and function of the aminoacyl-tRNA binding site. This Bacillus pumilus (strain SAFR-032) protein is Large ribosomal subunit protein bL19.